The chain runs to 1709 residues: Intraflagellar transport protein 122 (1709 aa).

2 WD repeats span residues 51–89 and 132–171; these read TQHP…ALFK and SFKG…LNSC. The disordered stretch occupies residues 209–229; sequence TIPQTVTPSASASGRSGSGKR. A WD 3 repeat occupies 634-673; that stretch reads LHRSPIVSLDISPDRKYISVVDRSDVVSVYKFLDDSEIVL. The LRR 1 repeat unit spans residues 1231-1256; sequence IEALERLRLSGNTSKEAIIIKQLIDA. The interval 1378-1404 is disordered; the sequence is LSGEDTVKASSQRSKKDNPPSLRSTIG. The LRR 2 repeat unit spans residues 1414 to 1436; sequence LGSLAHIDLGINNMNIPPGISEL.

It is found in the cell projection. Its subcellular location is the cilium. The protein resides in the flagellum. The protein localises to the cytoplasm. It localises to the cytoskeleton. It is found in the flagellum axoneme. Its subcellular location is the flagellum basal body. In terms of biological role, component of the intraflagellar transport complex A (IFT-A) involved in flagellar assembly. In Giardia intestinalis (strain ATCC 50803 / WB clone C6) (Giardia lamblia), this protein is Intraflagellar transport protein 122.